The sequence spans 220 residues: Putative DNA repair glycosylase MJ1434 (220 aa).

4 residues coordinate [4Fe-4S] cluster: C202, C208, C211, and C217.

Belongs to the Nth/MutY family. [4Fe-4S] cluster is required as a cofactor.

This Methanocaldococcus jannaschii (strain ATCC 43067 / DSM 2661 / JAL-1 / JCM 10045 / NBRC 100440) (Methanococcus jannaschii) protein is Putative DNA repair glycosylase MJ1434.